We begin with the raw amino-acid sequence, 319 residues long: FAD-dependent oxidoreductase FVFD30 (319 aa).

3 residues coordinate FAD: Arg6, Asp18, and Lys25. Residues Lys129 and Gly188 each coordinate NAD(+). The NADP(+) site is built by Lys129 and Gly188. The FAD site is built by Asp228 and Tyr265. Asp228 is a 6-hydroxy-FAD binding site. An NAD(+)-binding site is contributed by Tyr265. An NADP(+)-binding site is contributed by Tyr265. Residues 281–301 (GVGYFGVWWGIVIGGWLASLL) form a helical membrane-spanning segment.

The protein belongs to the FAD-dependent oxidoreductase family.

The protein localises to the membrane. In terms of biological role, probable FAD-dependent oxidoreductase that plays a role in the regulation of fruiting body development. This is FAD-dependent oxidoreductase FVFD30 from Flammulina velutipes (Agaricus velutipes).